We begin with the raw amino-acid sequence, 377 residues long: Pyruvate dehydrogenase E1 component subunit alpha, mitochondrial (377 aa).

A mitochondrion-targeting transit peptide spans 1–26 (MLSNFLKVNSKALGHIRTFASKSGEI). Pyruvate-binding residues include His-83, Tyr-109, Arg-110, Gly-156, Val-158, Asp-187, Gly-188, Ala-189, Asn-216, and Tyr-218. Residues Tyr-109, Arg-110, Gly-156, Val-158, Asp-187, Gly-188, Ala-189, and Asn-216 each coordinate thiamine diphosphate. Residue Asp-187 coordinates Mg(2+). Residues Asn-216 and Tyr-218 each contribute to the Mg(2+) site. His-283 provides a ligand contact to thiamine diphosphate.

In terms of assembly, tetramer of 2 alpha and 2 beta subunits. Requires thiamine diphosphate as cofactor. It depends on Mg(2+) as a cofactor.

Its subcellular location is the mitochondrion matrix. It carries out the reaction N(6)-[(R)-lipoyl]-L-lysyl-[protein] + pyruvate + H(+) = N(6)-[(R)-S(8)-acetyldihydrolipoyl]-L-lysyl-[protein] + CO2. Its activity is regulated as follows. E1 activity is regulated by phosphorylation (inactivation) and dephosphorylation (activation) of the alpha subunit. Its function is as follows. The pyruvate dehydrogenase complex catalyzes the overall conversion of pyruvate to acetyl-CoA and CO(2). It contains multiple copies of three enzymatic components: pyruvate dehydrogenase (E1), dihydrolipoamide acetyltransferase (E2) and lipoamide dehydrogenase (E3). This chain is Pyruvate dehydrogenase E1 component subunit alpha, mitochondrial (pdhA), found in Dictyostelium discoideum (Social amoeba).